A 133-amino-acid polypeptide reads, in one-letter code: Nickel-responsive regulator (133 aa).

Residues H76, H87, H89, and C95 each contribute to the Ni(2+) site.

Belongs to the transcriptional regulatory CopG/NikR family. In terms of assembly, homotetramer. Ni(2+) serves as cofactor.

Its function is as follows. Transcriptional repressor of the nikABCDE operon. Is active in the presence of excessive concentrations of intracellular nickel. This Escherichia coli O6:K15:H31 (strain 536 / UPEC) protein is Nickel-responsive regulator.